A 955-amino-acid chain; its full sequence is Outer capsid protein VP2 (955 aa).

This sequence belongs to the orbivirus VP2 family.

It is found in the virion. The VP2 protein is one of the two proteins (with VP5) which constitute the virus particle outer capsid. It is the major target of the host immunogenic response. Responsible for viral attachment to target host cell, probably by binding to sialic acid. This attachment induces virion internalization predominantly through clathrin-dependent endocytosis. In Antilocapra americana (Pronghorn), this protein is Outer capsid protein VP2 (Segment-2).